The sequence spans 377 residues: Glutamate 5-kinase (377 aa).

Lys22 serves as a coordination point for ATP. Substrate contacts are provided by Ser62, Asp149, and Asn161. ATP is bound by residues 181–182 and 223–229; these read TD and TGGMVTK. The region spanning 285–359 is the PUA domain; sequence QGTLVADSGA…GRNTAQLKRF (75 aa).

It belongs to the glutamate 5-kinase family.

It localises to the cytoplasm. The catalysed reaction is L-glutamate + ATP = L-glutamyl 5-phosphate + ADP. It participates in amino-acid biosynthesis; L-proline biosynthesis; L-glutamate 5-semialdehyde from L-glutamate: step 1/2. Catalyzes the transfer of a phosphate group to glutamate to form L-glutamate 5-phosphate. This is Glutamate 5-kinase from Bifidobacterium adolescentis (strain ATCC 15703 / DSM 20083 / NCTC 11814 / E194a).